The primary structure comprises 243 residues: NAD-dependent protein deacetylase (243 aa).

The region spanning 1–243 (MRNDLETLKH…VSVVKSLMTE (243 aa)) is the Deacetylase sirtuin-type domain. NAD(+) is bound by residues Ala24, Phe35, Arg36, Gln105, Ile107, Asp108, and His123. Phe35 is a nicotinamide binding site. Nicotinamide is bound by residues Ile107 and Asp108. The active-site Proton acceptor is His123. 4 residues coordinate Zn(2+): Cys131, Cys134, Cys151, and Cys154. Ser192, Ser193, Asn215, and Asp232 together coordinate NAD(+).

The protein belongs to the sirtuin family. Class U subfamily. Requires Zn(2+) as cofactor.

The protein localises to the cytoplasm. The catalysed reaction is N(6)-acetyl-L-lysyl-[protein] + NAD(+) + H2O = 2''-O-acetyl-ADP-D-ribose + nicotinamide + L-lysyl-[protein]. In terms of biological role, NAD-dependent protein deacetylase which modulates the activities of several enzymes which are inactive in their acetylated form. This Staphylococcus aureus (strain Mu50 / ATCC 700699) protein is NAD-dependent protein deacetylase.